The chain runs to 235 residues: 7-cyano-7-deazaguanine synthase (235 aa).

Residue 11 to 21 participates in ATP binding; that stretch reads FSGGQDSTTCV. 4 residues coordinate Zn(2+): cysteine 199, cysteine 214, cysteine 217, and cysteine 220.

The protein belongs to the QueC family. Zn(2+) serves as cofactor.

The catalysed reaction is 7-carboxy-7-deazaguanine + NH4(+) + ATP = 7-cyano-7-deazaguanine + ADP + phosphate + H2O + H(+). The protein operates within purine metabolism; 7-cyano-7-deazaguanine biosynthesis. Catalyzes the ATP-dependent conversion of 7-carboxy-7-deazaguanine (CDG) to 7-cyano-7-deazaguanine (preQ(0)). This chain is 7-cyano-7-deazaguanine synthase, found in Janthinobacterium sp. (strain Marseille) (Minibacterium massiliensis).